We begin with the raw amino-acid sequence, 196 residues long: Ribosome-binding factor A (196 aa).

This sequence belongs to the RbfA family. As to quaternary structure, monomer. Binds 30S ribosomal subunits, but not 50S ribosomal subunits or 70S ribosomes.

It localises to the cytoplasm. Its function is as follows. One of several proteins that assist in the late maturation steps of the functional core of the 30S ribosomal subunit. Associates with free 30S ribosomal subunits (but not with 30S subunits that are part of 70S ribosomes or polysomes). Required for efficient processing of 16S rRNA. May interact with the 5'-terminal helix region of 16S rRNA. In Tropheryma whipplei (strain TW08/27) (Whipple's bacillus), this protein is Ribosome-binding factor A.